Here is a 323-residue protein sequence, read N- to C-terminus: Methenyltetrahydromethanopterin cyclohydrolase (323 aa).

The protein belongs to the MCH family.

It localises to the cytoplasm. The catalysed reaction is 5,10-methenyl-5,6,7,8-tetrahydromethanopterin + H2O = N(5)-formyl-5,6,7,8-tetrahydromethanopterin + H(+). It participates in one-carbon metabolism; methanogenesis from CO(2); 5,10-methenyl-5,6,7,8-tetrahydromethanopterin from CO(2): step 3/3. Catalyzes the reversible interconversion of 5-formyl-H(4)MPT to methenyl-H(4)MPT(+). The polypeptide is Methenyltetrahydromethanopterin cyclohydrolase (Methanococcus vannielii (strain ATCC 35089 / DSM 1224 / JCM 13029 / OCM 148 / SB)).